A 206-amino-acid chain; its full sequence is Protein GrpE (206 aa).

The segment covering 1–14 (MDKKNEQQEVREEN) has biased composition (basic and acidic residues). The segment at 1–56 (MDKKNEQQEVREENDTSINQESETQVELEEEVVNEECETSSEKTDEKEVDDENVTD) is disordered. A compositionally biased stretch (acidic residues) spans 24-39 (TQVELEEEVVNEECET).

The protein belongs to the GrpE family. In terms of assembly, homodimer.

It localises to the cytoplasm. In terms of biological role, participates actively in the response to hyperosmotic and heat shock by preventing the aggregation of stress-denatured proteins, in association with DnaK and GrpE. It is the nucleotide exchange factor for DnaK and may function as a thermosensor. Unfolded proteins bind initially to DnaJ; upon interaction with the DnaJ-bound protein, DnaK hydrolyzes its bound ATP, resulting in the formation of a stable complex. GrpE releases ADP from DnaK; ATP binding to DnaK triggers the release of the substrate protein, thus completing the reaction cycle. Several rounds of ATP-dependent interactions between DnaJ, DnaK and GrpE are required for fully efficient folding. In Clostridioides difficile (strain 630) (Peptoclostridium difficile), this protein is Protein GrpE.